The primary structure comprises 504 residues: Anaerobic nitric oxide reductase transcription regulator NorR (504 aa).

D57 carries the 4-aspartylphosphate modification. Positions 187–416 (MIGLSPGMTQ…LEHAIHRAVV (230 aa)) constitute a Sigma-54 factor interaction domain. ATP contacts are provided by residues 215–222 (GETGTGKE) and 278–287 (ADNGTLFLDE). Residues 479–498 (WAASARMLETDVANLHRLAK) constitute a DNA-binding region (H-T-H motif).

The protein operates within nitrogen metabolism; nitric oxide reduction. Required for the expression of anaerobic nitric oxide (NO) reductase, acts as a transcriptional activator for at least the norVW operon. Activation also requires sigma-54. This is Anaerobic nitric oxide reductase transcription regulator NorR from Escherichia fergusonii (strain ATCC 35469 / DSM 13698 / CCUG 18766 / IAM 14443 / JCM 21226 / LMG 7866 / NBRC 102419 / NCTC 12128 / CDC 0568-73).